A 208-amino-acid chain; its full sequence is Small ribosomal subunit protein uS4 (208 aa).

Residues 28-48 (YMERRPYGPGEHGRARKKQDS) are disordered. Positions 95–160 (MRLDALVLRA…MPPFQVAAAG (66 aa)) constitute an S4 RNA-binding domain.

The protein belongs to the universal ribosomal protein uS4 family. As to quaternary structure, part of the 30S ribosomal subunit. Contacts protein S5. The interaction surface between S4 and S5 is involved in control of translational fidelity.

One of the primary rRNA binding proteins, it binds directly to 16S rRNA where it nucleates assembly of the body of the 30S subunit. In terms of biological role, with S5 and S12 plays an important role in translational accuracy. The protein is Small ribosomal subunit protein uS4 of Arthrobacter sp. (strain FB24).